The chain runs to 449 residues: 3-phosphoshikimate 1-carboxyvinyltransferase (449 aa).

The tract at residues 1–30 (MSHDSSPQPLTAAPGAPLRGRLRPPGDKSI) is disordered. Positions 28, 29, and 33 each coordinate 3-phosphoshikimate. Residue Lys-28 participates in phosphoenolpyruvate binding. Phosphoenolpyruvate-binding residues include Gly-101 and Arg-129. 3-phosphoshikimate contacts are provided by Ser-175, Gln-177, Asp-330, and Lys-357. Residue Gln-177 participates in phosphoenolpyruvate binding. Catalysis depends on Asp-330, which acts as the Proton acceptor. 2 residues coordinate phosphoenolpyruvate: Arg-361 and Arg-405.

It belongs to the EPSP synthase family. In terms of assembly, monomer.

It is found in the cytoplasm. It carries out the reaction 3-phosphoshikimate + phosphoenolpyruvate = 5-O-(1-carboxyvinyl)-3-phosphoshikimate + phosphate. Its pathway is metabolic intermediate biosynthesis; chorismate biosynthesis; chorismate from D-erythrose 4-phosphate and phosphoenolpyruvate: step 6/7. Its function is as follows. Catalyzes the transfer of the enolpyruvyl moiety of phosphoenolpyruvate (PEP) to the 5-hydroxyl of shikimate-3-phosphate (S3P) to produce enolpyruvyl shikimate-3-phosphate and inorganic phosphate. The protein is 3-phosphoshikimate 1-carboxyvinyltransferase of Methylobacterium radiotolerans (strain ATCC 27329 / DSM 1819 / JCM 2831 / NBRC 15690 / NCIMB 10815 / 0-1).